The following is a 152-amino-acid chain: VQ motif-containing protein 8, chloroplastic (152 aa).

The tract at residues 1 to 42 (MIPTRCNEINGSRPSSLKLAGESHTIKKTSSCKSKPRPHGRA) is disordered. Residues 1–58 (MIPTRCNEINGSRPSSLKLAGESHTIKKTSSCKSKPRPHGRASPVIIYAHSPKVIHTR) constitute a chloroplast transit peptide. The VQ signature appears at 62-71 (FMALVQRLTG). The interval 80-108 (TSESSSSVVTEEVNVGDDNTAAPFSQDRT) is disordered. The segment covering 81 to 92 (SESSSSVVTEEV) has biased composition (low complexity).

The protein localises to the plastid. Its subcellular location is the chloroplast. Its function is as follows. May be involved in chloroplast development. The chain is VQ motif-containing protein 8, chloroplastic from Arabidopsis thaliana (Mouse-ear cress).